We begin with the raw amino-acid sequence, 107 residues long: MEVQAVLGMILLFHPERCSKKPGEKVRKSEFQKEVLKKVYQATPYPTWENKIDIGILISLSPRAVDIWFQNKRHINKGKNQGVDEAVESRTIDLQTIMSIVESTLRY.

The segment at residues Lys-21–Asn-80 is a DNA-binding region (homeobox).

The protein resides in the nucleus. The sequence is that of Homeobox protein HD-7 (HD-7) from Encephalitozoon cuniculi (strain GB-M1) (Microsporidian parasite).